A 294-amino-acid chain; its full sequence is 33 kDa chaperonin (294 aa).

2 disulfide bridges follow: Cys239/Cys241 and Cys272/Cys275.

The protein belongs to the HSP33 family. In terms of processing, under oxidizing conditions two disulfide bonds are formed involving the reactive cysteines. Under reducing conditions zinc is bound to the reactive cysteines and the protein is inactive.

Its subcellular location is the cytoplasm. Functionally, redox regulated molecular chaperone. Protects both thermally unfolding and oxidatively damaged proteins from irreversible aggregation. Plays an important role in the bacterial defense system toward oxidative stress. In Listeria innocua serovar 6a (strain ATCC BAA-680 / CLIP 11262), this protein is 33 kDa chaperonin.